The sequence spans 520 residues: L-tyrosine:2-oxoglutarate aminotransferase amt1 (520 aa).

It belongs to the class-I pyridoxal-phosphate-dependent aminotransferase family. Pyridoxal 5'-phosphate serves as cofactor.

It carries out the reaction L-tyrosine + 2-oxoglutarate = 3-(4-hydroxyphenyl)pyruvate + L-glutamate. The protein operates within secondary metabolite biosynthesis. Its function is as follows. An L-tyrosine:2-oxoglutarate aminotransferase (probably amt1) and atromentin synthetase nps3 catalyze consecutive steps to turn over L-tyrosine into atromentin, which represents the generic precursor molecule for the entire terphenylquinone and pulvinic acid family of pigments, which are widely distributed secondary metabolites in homobasidiomycetes. The first step catalyzed by amt1 converts L-tyrosine in to 4-hydroxyphenylpyruvate (4-HPP). Adenylation of two 4-HPP monomers by the nps3 adenylation (A) domain, covalent tethering of the monomers as a thioester and oxoester onto the nps3 thiolation (T) and thioesterase (TE) domains, respectively, and symmetric C-C-bond formation between two monomers catalyzed by the nps3 TE domain leads to atromentin. Follow-up products of atromentin in S.lacrymans include atromentic acid, xerocomic acid, isoxerocomic acid and variegatic acid. The protein is L-tyrosine:2-oxoglutarate aminotransferase amt1 (amt1) of Serpula lacrymans var. lacrymans (strain S7.9) (Dry rot fungus).